Reading from the N-terminus, the 196-residue chain is RNA annealing protein YRA2 (196 aa).

2 disordered regions span residues M1 to Q63 and D143 to N196. The RRM domain occupies Q63–Q137. The span at R149–G159 shows a compositional bias: basic and acidic residues.

It belongs to the YRA1 family. Associates with mRNPs.

The protein localises to the nucleus. Functionally, involved in export of poly(A) mRNAs from the nucleus. Recruited to the coding sequences as well as poly-A sites of active genes. In Eremothecium gossypii (strain ATCC 10895 / CBS 109.51 / FGSC 9923 / NRRL Y-1056) (Yeast), this protein is RNA annealing protein YRA2 (YRA2).